Reading from the N-terminus, the 393-residue chain is UDP-sulfoquinovose synthase (393 aa).

NAD(+)-binding positions include 31-35 (DNLST), 74-75 (DI), R100, and N118. R100 contacts substrate. Substrate contacts are provided by T144 and Y182. T144 is an active-site residue. NAD(+)-binding residues include Y182 and K186. The active-site Proton acceptor is the Y182. K186 is an active-site residue. Q209 serves as a coordination point for substrate. V212 contacts NAD(+). Substrate is bound by residues 238-241 (VVNR), 253-255 (TVY), and 326-328 (RVE).

This sequence belongs to the NAD(P)-dependent epimerase/dehydratase family. Requires NAD(+) as cofactor.

The enzyme catalyses sulfite + UDP-alpha-D-glucose + H(+) = UDP-alpha-D-6-sulfoquinovose + H2O. Catalyzes the biosynthesis of UDP-sulfoquinovose by the transfer of sulfite to UDP-glucose. Important for the assembly of the S-layer N-glycans. The reaction probably occurs through an NAD(+)-dependent oxidation/dehydration/enolization/sulfite addition process. In vitro, in the absence of sulfite, UDP-D-glucose is converted via UDP-4-keto-D-glucose to UDP-D-glucose-5,6-ene. The protein is UDP-sulfoquinovose synthase of Sulfolobus acidocaldarius (strain ATCC 33909 / DSM 639 / JCM 8929 / NBRC 15157 / NCIMB 11770).